Consider the following 418-residue polypeptide: tRNA-2-methylthio-N(6)-dimethylallyladenosine synthase (418 aa).

In terms of domain architecture, MTTase N-terminal spans 2-118; sequence PGYYLWTIGC…WGEIPEGFIL (117 aa). The [4Fe-4S] cluster site is built by cysteine 11, cysteine 47, cysteine 81, cysteine 134, cysteine 138, and cysteine 141. The 233-residue stretch at 120-352 folds into the Radical SAM core domain; it reads LKPPVSASIT…DLQKETVSKA (233 aa). In terms of domain architecture, TRAM spans 354–414; the sequence is SALVDTFAEV…PWSLQAKLVK (61 aa).

It belongs to the methylthiotransferase family. MiaB subfamily. As to quaternary structure, monomer. [4Fe-4S] cluster serves as cofactor.

The protein resides in the cytoplasm. The enzyme catalyses N(6)-dimethylallyladenosine(37) in tRNA + (sulfur carrier)-SH + AH2 + 2 S-adenosyl-L-methionine = 2-methylsulfanyl-N(6)-dimethylallyladenosine(37) in tRNA + (sulfur carrier)-H + 5'-deoxyadenosine + L-methionine + A + S-adenosyl-L-homocysteine + 2 H(+). Catalyzes the methylthiolation of N6-(dimethylallyl)adenosine (i(6)A), leading to the formation of 2-methylthio-N6-(dimethylallyl)adenosine (ms(2)i(6)A) at position 37 in tRNAs that read codons beginning with uridine. The sequence is that of tRNA-2-methylthio-N(6)-dimethylallyladenosine synthase from Dehalococcoides mccartyi (strain ATCC BAA-2266 / KCTC 15142 / 195) (Dehalococcoides ethenogenes (strain 195)).